We begin with the raw amino-acid sequence, 146 residues long: 3-dehydroquinate dehydratase (146 aa).

The Proton acceptor role is filled by Tyr-22. 3 residues coordinate substrate: Asn-73, His-79, and Asp-86. His-99 (proton donor) is an active-site residue. Residues Ile-100 to Ser-101 and Arg-110 contribute to the substrate site.

The protein belongs to the type-II 3-dehydroquinase family. Homododecamer.

It carries out the reaction 3-dehydroquinate = 3-dehydroshikimate + H2O. The protein operates within metabolic intermediate biosynthesis; chorismate biosynthesis; chorismate from D-erythrose 4-phosphate and phosphoenolpyruvate: step 3/7. In terms of biological role, catalyzes a trans-dehydration via an enolate intermediate. In Prochlorococcus marinus subsp. pastoris (strain CCMP1986 / NIES-2087 / MED4), this protein is 3-dehydroquinate dehydratase.